The primary structure comprises 143 residues: Larval cuticle protein LCP-17 (143 aa).

The signal sequence occupies residues 1–16 (MKFLIVLAVAVACASA). The 70-residue stretch at 41–110 (EGHFQFNYET…PQGSHLPTPH (70 aa)) folds into the Chitin-binding type R&amp;R domain.

Functionally, component of the cuticle of the larva of Bombyx mori. The sequence is that of Larval cuticle protein LCP-17 (LCP17) from Bombyx mori (Silk moth).